We begin with the raw amino-acid sequence, 221 residues long: Josephin-like protein (221 aa).

Positions 1–37 (MESPSARTLGNSLGDDSGNGNENGNGSGNGNTTMMPH) are disordered. The span at 9–20 (LGNSLGDDSGNG) shows a compositional bias: low complexity. Positions 36-214 (PHGIYHERQT…DCKDKSQQRW (179 aa)) constitute a Josephin domain. Cysteine 49 serves as the catalytic Nucleophile. Histidine 152 acts as the Proton acceptor in catalysis.

The catalysed reaction is Thiol-dependent hydrolysis of ester, thioester, amide, peptide and isopeptide bonds formed by the C-terminal Gly of ubiquitin (a 76-residue protein attached to proteins as an intracellular targeting signal).. Functionally, may act as a deubiquitinating enzyme. This chain is Josephin-like protein, found in Drosophila melanogaster (Fruit fly).